The primary structure comprises 62 residues: Double zinc ribbon protein TK0111 (62 aa).

Residues cysteine 13, cysteine 16, cysteine 31, cysteine 34, cysteine 42, cysteine 45, cysteine 54, and cysteine 57 each contribute to the Zn(2+) site.

Crystallized in association with 70S ribosomes. Requires Zn(2+) as cofactor.

In Thermococcus kodakarensis (strain ATCC BAA-918 / JCM 12380 / KOD1) (Pyrococcus kodakaraensis (strain KOD1)), this protein is Double zinc ribbon protein TK0111.